The primary structure comprises 217 residues: GrpE protein homolog 1, mitochondrial (217 aa).

A mitochondrion-targeting transit peptide spans 1-27; the sequence is MAAQCVRLARRSLPALALSLRPSPRLL. A disordered region spans residues 29–56; the sequence is TATKQKNSGQNLEEDMGQSEQKADPPAT. Positions 30–39 are enriched in polar residues; that stretch reads ATKQKNSGQN. Residue K94 is modified to N6-acetyllysine; alternate. Residue K94 is modified to N6-succinyllysine; alternate. K100 carries the N6-acetyllysine modification. K120 is subject to N6-succinyllysine. At K215 the chain carries N6-acetyllysine; alternate. Position 215 is an N6-succinyllysine; alternate (K215).

Belongs to the GrpE family. As to quaternary structure, probable component of the PAM complex at least composed of a mitochondrial HSP70 protein, GRPEL1 or GRPEL2, TIMM44, TIMM16/PAM16 and TIMM14/DNAJC19. Binds to HSP70, HSC70 and HSJ1B.

It localises to the mitochondrion matrix. Its function is as follows. Essential component of the PAM complex, a complex required for the translocation of transit peptide-containing proteins from the inner membrane into the mitochondrial matrix in an ATP-dependent manner. Seems to control the nucleotide-dependent binding of mitochondrial HSP70 to substrate proteins. The polypeptide is GrpE protein homolog 1, mitochondrial (GRPEL1) (Homo sapiens (Human)).